Here is a 435-residue protein sequence, read N- to C-terminus: Ribulose bisphosphate carboxylase large chain (435 aa).

An N6,N6,N6-trimethyllysine modification is found at lysine 5. 2 residues coordinate substrate: asparagine 114 and threonine 164. Residue lysine 166 is the Proton acceptor of the active site. Lysine 168 is a binding site for substrate. 3 residues coordinate Mg(2+): lysine 192, aspartate 194, and glutamate 195. Position 192 is an N6-carboxylysine (lysine 192). Residue histidine 285 is the Proton acceptor of the active site. 3 residues coordinate substrate: arginine 286, histidine 318, and serine 370.

It belongs to the RuBisCO large chain family. Type I subfamily. In terms of assembly, heterohexadecamer of 8 large chains and 8 small chains; disulfide-linked. The disulfide link is formed within the large subunit homodimers. Mg(2+) serves as cofactor. In terms of processing, the disulfide bond which can form in the large chain dimeric partners within the hexadecamer appears to be associated with oxidative stress and protein turnover.

It localises to the plastid. It is found in the chloroplast. The enzyme catalyses 2 (2R)-3-phosphoglycerate + 2 H(+) = D-ribulose 1,5-bisphosphate + CO2 + H2O. The catalysed reaction is D-ribulose 1,5-bisphosphate + O2 = 2-phosphoglycolate + (2R)-3-phosphoglycerate + 2 H(+). In terms of biological role, ruBisCO catalyzes two reactions: the carboxylation of D-ribulose 1,5-bisphosphate, the primary event in carbon dioxide fixation, as well as the oxidative fragmentation of the pentose substrate in the photorespiration process. Both reactions occur simultaneously and in competition at the same active site. The sequence is that of Ribulose bisphosphate carboxylase large chain from Drosera burmannii (Burmese sundew).